Consider the following 86-residue polypeptide: Large ribosomal subunit protein bL27c (86 aa).

The tract at residues 1-20 (MAHKKGSGSTRNGRDSNAQR) is disordered. Polar residues predominate over residues 7-19 (SGSTRNGRDSNAQ).

This sequence belongs to the bacterial ribosomal protein bL27 family.

Its subcellular location is the plastid. It localises to the chloroplast. In Guillardia theta (Cryptophyte), this protein is Large ribosomal subunit protein bL27c (rpl27).